Here is a 131-residue protein sequence, read N- to C-terminus: Thrombocorticin (131 aa).

An intrachain disulfide couples Cys3 to Cys111. Positions 28–60 are disordered; that stretch reads RNESVEVKDSNGNTVSRGSGSSSSGGTFTVINM. Positions 37–54 are enriched in low complexity; it reads SNGNTVSRGSGSSSSGGT. Positions 117–131 match the Pseudodomain-swapping motif motif; sequence DFNDVFVLITGLVRG.

Its function is as follows. Binds to fucose and mannose in a calcium-dependent manner (in vitro). Acts as an agonist for human thrombopoietin receptor MPL (in vitro). Binding of sugar-moieties may promote the interaction with human MPL on the cell surface (in vitro). Catalyzes MPL dimerization and activation, and modulates internalization of the receptor (in vitro). Exhibits proliferation activity in murine recombinant Ba/F3 cells expressing human MPL (Ba/F3-huMPL) (in vitro). Induces phosphorylation of STAT5 in recombinant Ba/F3-huMPL cells, possibly by stimulating MPL on the cell surface to transduce signals via Jak/STAT signaling pathway (in vitro). Does not aggregate rabbit erythrocytes, indicating absent lectin-like agglutination activity (in vitro). The polypeptide is Thrombocorticin (Corticium sp. (Marine sponge)).